Reading from the N-terminus, the 502-residue chain is MFSETFVPSIFSYKHRLLHLSVLFFIVPYWYSYYNDQHRLSSYSVETAMFLSWERAIVKPGAMFKKAVIGFNCNVDLIVSGVRVVDALNTTCSEGKDQETLETLADLHQTFAHFFQRGAAAERYMSSEDQFNLLVAESEASTRSHHHIGGNAALMADRIAANFPSTEVYLVGPIGPRSQALLHPSVKRTNSTRILKDELHVILEYKQGEILGDWVAPSSSRFITSHDHFSGSMVVMEMFFKAIAQFRPDLVVITGVHLLEFQSKEMRQEKMRLIKRNLLQIPPKVPIHLELGSLADEIFSTDVINKILPYVDSLGINEQELTFLSHIANGPHMEEYPVQAGTVHVHKVVEMLHWLLKTYGRDPTGQIASKTGYRLSRIHFHCLTYHIMVSSGTDWSNLAAGLAAGARIAGRLSCNIGANTMDSELLEIRTPANFVLDKKIEKNYQFEAHNPIASWMREDVLFVFTPVLVCRLPSKTVGIDDAISATGLLYSQFYRLNRPTHW.

Residues 1 to 32 (MFSETFVPSIFSYKHRLLHLSVLFFIVPYWYS) form the signal peptide. In terms of domain architecture, ADPK spans 44–497 (SVETAMFLSW…LLYSQFYRLN (454 aa)). N89 and N190 each carry an N-linked (GlcNAc...) asparagine glycan. 3 residues coordinate Mg(2+): E290, E320, and D481. D481 acts as the Proton acceptor in catalysis.

It belongs to the ADP-dependent glucokinase family. As to quaternary structure, monomer. Mg(2+) is required as a cofactor.

It is found in the secreted. The enzyme catalyses D-glucose + ADP = D-glucose 6-phosphate + AMP + H(+). It functions in the pathway carbohydrate degradation; glycolysis. In terms of biological role, catalyzes the phosphorylation of D-glucose to D-glucose 6-phosphate using ADP as the phosphate donor. GDP and CDP can replace ADP, but with reduced efficiency. The chain is Probable ADP-dependent glucokinase from Caenorhabditis elegans.